The following is a 288-amino-acid chain: Quinate/shikimate dehydrogenase (288 aa).

Residues K71 and D107 each contribute to the substrate site. Residues 132–135 (AGGA), 155–158 (NRRD), K205, 232–235 (CVYN), and G255 contribute to the NAD(+) site.

The protein belongs to the shikimate dehydrogenase family. In terms of assembly, homodimer.

It catalyses the reaction L-quinate + NAD(+) = 3-dehydroquinate + NADH + H(+). The catalysed reaction is L-quinate + NADP(+) = 3-dehydroquinate + NADPH + H(+). It carries out the reaction shikimate + NADP(+) = 3-dehydroshikimate + NADPH + H(+). The enzyme catalyses shikimate + NAD(+) = 3-dehydroshikimate + NADH + H(+). Its pathway is metabolic intermediate biosynthesis; chorismate biosynthesis; chorismate from D-erythrose 4-phosphate and phosphoenolpyruvate: step 4/7. Functionally, the actual biological function of YdiB remains unclear, nor is it known whether 3-dehydroshikimate or quinate represents the natural substrate. Catalyzes the reversible NAD-dependent reduction of both 3-dehydroshikimate (DHSA) and 3-dehydroquinate to yield shikimate (SA) and quinate, respectively. It can use both NAD or NADP for catalysis, however it has higher catalytic efficiency with NAD. This is Quinate/shikimate dehydrogenase from Shigella sonnei (strain Ss046).